The chain runs to 485 residues: Glutamyl-tRNA(Gln) amidotransferase subunit A (485 aa).

Residues Lys-79 and Ser-154 each act as charge relay system in the active site. The Acyl-ester intermediate role is filled by Ser-178.

The protein belongs to the amidase family. GatA subfamily. In terms of assembly, heterotrimer of A, B and C subunits.

It carries out the reaction L-glutamyl-tRNA(Gln) + L-glutamine + ATP + H2O = L-glutaminyl-tRNA(Gln) + L-glutamate + ADP + phosphate + H(+). Allows the formation of correctly charged Gln-tRNA(Gln) through the transamidation of misacylated Glu-tRNA(Gln) in organisms which lack glutaminyl-tRNA synthetase. The reaction takes place in the presence of glutamine and ATP through an activated gamma-phospho-Glu-tRNA(Gln). This chain is Glutamyl-tRNA(Gln) amidotransferase subunit A, found in Persephonella marina (strain DSM 14350 / EX-H1).